Here is a 465-residue protein sequence, read N- to C-terminus: Phosphatidylserine synthase 1 (465 aa).

At 1–35 (MATTFRSQTLSKDDVNYRMHFRMINEQQVEDITIQ) the chain is on the cytoplasmic side. Residues 36–56 (FFYKPHTISLLTVTVLSLMYF) form a helical membrane-spanning segment. Residues 57–70 (AFTRDDGDPDSNLR) lie on the Lumenal side of the membrane. The chain crosses the membrane as a helical span at residues 71-91 (VGLILLVSFFLVISVLAFPNG). The Cytoplasmic segment spans residues 92 to 102 (PFTRPHPAIWR). The helical transmembrane segment at 103–123 (IVFGLSVLYFLFLVFIIFLNW) threads the bilayer. The Lumenal segment spans residues 124-286 (DQVKALMFWL…WLDPKSSLQR (163 aa)). Residues 287-307 (VMGVYLFMIIWQLTELNTFFL) form a helical membrane-spanning segment. The Cytoplasmic portion of the chain corresponds to 308 to 309 (KH). Residues 310–330 (IFVFPACHALSWCRILFIGII) form a helical membrane-spanning segment. At 331-355 (TAPTVRQYYAYLTDTQCKRVGTQCW) the chain is on the lumenal side. Residues 356-376 (VFGAIAFLEALACIKFGQDLF) traverse the membrane as a helical segment. Residues 377–380 (SKTQ) lie on the Cytoplasmic side of the membrane. A helical membrane pass occupies residues 381–401 (ILYVILWLVCLAFITFLCLYV). Topologically, residues 402–465 (MVWYAENYGP…DSRTINGMEK (64 aa)) are lumenal. The disordered stretch occupies residues 446 to 465 (CSTRKRRDSGDSRTINGMEK).

The protein belongs to the phosphatidyl serine synthase family.

It localises to the endoplasmic reticulum membrane. It catalyses the reaction a 1,2-diacyl-sn-glycero-3-phosphoethanolamine + L-serine = a 1,2-diacyl-sn-glycero-3-phospho-L-serine + ethanolamine. The enzyme catalyses a 1,2-diacyl-sn-glycero-3-phosphocholine + L-serine = a 1,2-diacyl-sn-glycero-3-phospho-L-serine + choline. It participates in phospholipid metabolism; phosphatidylserine biosynthesis. Catalyzes a base-exchange reaction in which the polar head group of phosphatidylethanolamine (PE) or phosphatidylcholine (PC) is replaced by L-serine. Catalyzes mainly the conversion of phosphatidylcholine but also converts, in vitro and to a lesser extent, phosphatidylethanolamine. The protein is Phosphatidylserine synthase 1 (ptdss1) of Danio rerio (Zebrafish).